A 347-amino-acid chain; its full sequence is Heme A synthase (347 aa).

8 consecutive transmembrane segments (helical) span residues 17–37 (LANWLLLVAVLVFAIVVVGGI), 106–126 (GIGAVLAGVMIVAWWKRAIPA), 132–152 (MIGIFALGGLQGAIGWWMVYS), 165–185 (LATHLIAALLIFSALVWTVLD), 202–222 (ALAIAAVLILAVQIMLGAFVA), 260–280 (IVVQFVHRWWAWAAAIAALAV), 295–315 (AVATLIVVQIALGIATLLTGV), and 317–337 (IAVAVAHQAVAVLLLAALLWA). Position 266 (H266) interacts with heme. Residue H323 participates in heme binding.

The protein belongs to the COX15/CtaA family. Type 2 subfamily. As to quaternary structure, interacts with CtaB. It depends on heme b as a cofactor.

The protein resides in the cell membrane. It carries out the reaction Fe(II)-heme o + 2 A + H2O = Fe(II)-heme a + 2 AH2. The protein operates within porphyrin-containing compound metabolism; heme A biosynthesis; heme A from heme O: step 1/1. Its function is as follows. Catalyzes the conversion of heme O to heme A by two successive hydroxylations of the methyl group at C8. The first hydroxylation forms heme I, the second hydroxylation results in an unstable dihydroxymethyl group, which spontaneously dehydrates, resulting in the formyl group of heme A. The chain is Heme A synthase from Rhizorhabdus wittichii (strain DSM 6014 / CCUG 31198 / JCM 15750 / NBRC 105917 / EY 4224 / RW1) (Sphingomonas wittichii).